Consider the following 368-residue polypeptide: Germination protease (368 aa).

A propeptide spanning residues 1-15 (MKEPLDLSKYSVRTD) is cleaved from the precursor.

It belongs to the peptidase A25 family. In terms of assembly, homotetramer. In terms of processing, autoproteolytically processed. The inactive tetrameric zymogen termed p46 autoprocesses to a smaller form termed p41, which is active only during spore germination.

It catalyses the reaction Endopeptidase action with P4 Glu or Asp, P1 preferably Glu &gt; Asp, P1' hydrophobic and P2' Ala.. In terms of biological role, initiates the rapid degradation of small, acid-soluble proteins during spore germination. The protein is Germination protease of Bacillus anthracis (strain A0248).